A 178-amino-acid polypeptide reads, in one-letter code: ATP-dependent protease subunit HslV (178 aa).

Thr-7 is an active-site residue. Residues Gly-162, Cys-165, and Thr-168 each contribute to the Na(+) site.

Belongs to the peptidase T1B family. HslV subfamily. In terms of assembly, a double ring-shaped homohexamer of HslV is capped on each side by a ring-shaped HslU homohexamer. The assembly of the HslU/HslV complex is dependent on binding of ATP.

It localises to the cytoplasm. The enzyme catalyses ATP-dependent cleavage of peptide bonds with broad specificity.. Its activity is regulated as follows. Allosterically activated by HslU binding. Functionally, protease subunit of a proteasome-like degradation complex believed to be a general protein degrading machinery. This chain is ATP-dependent protease subunit HslV, found in Burkholderia multivorans (strain ATCC 17616 / 249).